We begin with the raw amino-acid sequence, 251 residues long: Duodenase-1 (251 aa).

A signal peptide spans 1–17; it reads MVLLLLLVALLSPTGEA. A propeptide spanning residues 18–19 is cleaved from the precursor; that stretch reads GK. In terms of domain architecture, Peptidase S1 spans 20–242; it reads IIGGHEAKPH…SFLSWIHSTM (223 aa). An intrachain disulfide couples Cys48 to Cys64. His63 functions as the Charge relay system in the catalytic mechanism. A glycan (N-linked (GlcNAc...) asparagine) is linked at Asn70. Asp107 functions as the Charge relay system in the catalytic mechanism. 2 cysteine pairs are disulfide-bonded: Cys141/Cys207 and Cys172/Cys186. Ser201 functions as the Charge relay system in the catalytic mechanism.

It belongs to the peptidase S1 family. Monomer.

Its function is as follows. Protease which has both trypsin-like and chymotrypsin-like activities. Shows a preferential cleavage after Lys, Arg, Tyr, Phe, and Leu residues. This Bos taurus (Bovine) protein is Duodenase-1 (BDMD1).